Consider the following 127-residue polypeptide: UPF0325 protein VIBHAR_03240 (127 aa).

The protein belongs to the UPF0325 family.

The polypeptide is UPF0325 protein VIBHAR_03240 (Vibrio campbellii (strain ATCC BAA-1116)).